A 305-amino-acid chain; its full sequence is Olfactory receptor 4F4 (305 aa).

The Extracellular segment spans residues 1 to 18 (MVTEFIFLGLSDSQELQT). A helical membrane pass occupies residues 19–42 (FLFMLFFVFYGGIVFGNLLIVITV). Residues 43–50 (VSDSHLHS) are Cytoplasmic-facing. A helical membrane pass occupies residues 51–72 (PMYFLLANLSLIDLSLSSVTAP). Over 73–93 (KMITDFFSQRKVISFKGCLVQ) the chain is Extracellular. Residues Cys90 and Cys182 are joined by a disulfide bond. A helical transmembrane segment spans residues 94–113 (IFLLHFFGGSEMVILIAMGF). The Cytoplasmic portion of the chain corresponds to 114-132 (DRYIAICKPLHYTTIMCGN). Residues 133 to 151 (ACVGIMAVAWGIGFLHSVS) traverse the membrane as a helical segment. The Extracellular segment spans residues 152–188 (QLAFAVHLPFCGPNEVDSFYCDLPRVIKLACTDTYRL). Residues 189–212 (DIMVIANSGVLTVCSFVLLIISYT) traverse the membrane as a helical segment. At 213–228 (IILMTIQHCPLDKSSK) the chain is on the cytoplasmic side. The helical transmembrane segment at 229–251 (ALSTLTAHITVVLLFFGPCVFIY) threads the bilayer. Topologically, residues 252–262 (AWPFPIKSLDK) are extracellular. Residues 263-282 (FLAVFYSVITPLLNPIIYTL) traverse the membrane as a helical segment. The Cytoplasmic portion of the chain corresponds to 283–305 (RNKDMKTAIRRLRKWDAHSSVKF).

It belongs to the G-protein coupled receptor 1 family.

Its subcellular location is the cell membrane. Its function is as follows. Odorant receptor. The polypeptide is Olfactory receptor 4F4 (OR4F4) (Homo sapiens (Human)).